We begin with the raw amino-acid sequence, 180 residues long: Pro-glucagon (180 aa).

A signal peptide spans 1-20 (MKSIYFVAGLFVMLVQGSWQ). Residues 26-59 (TEEKSRSFSASQADPLSDPDQMNEDKRHSQGTFT) form a disordered region. Position 54 is a phosphoserine (Ser54). Residues 84 to 89 (NRNNIA) constitute a propeptide that is removed on maturation. Phosphoserine is present on residues Ser105 and Ser108. Arg127 carries the arginine amide modification. Residues 131-145 (DFPEEVAIVEELGRR) constitute a propeptide that is removed on maturation. Residues Ser150 and Ser152 each carry the phosphoserine modification.

This sequence belongs to the glucagon family. Proglucagon is post-translationally processed in a tissue-specific manner in pancreatic A cells and intestinal L cells. In pancreatic A cells, the major bioactive hormone is glucagon cleaved by PCSK2/PC2. In the intestinal L cells PCSK1/PC1 liberates GLP-1, GLP-2, glicentin and oxyntomodulin. GLP-1 is further N-terminally truncated by post-translational processing in the intestinal L cells resulting in GLP-1(7-37) GLP-1-(7-36)amide. The C-terminal amidation is neither important for the metabolism of GLP-1 nor for its effects on the endocrine pancreas. In terms of tissue distribution, secreted in the A cells of the islets of Langerhans. Secreted in the A cells of the islets of Langerhans. Secreted from enteroendocrine L cells throughout the gastrointestinal tract. Also secreted in selected neurons in the brain. As to expression, secreted from enteroendocrine cells throughout the gastrointestinal tract. Also secreted in selected neurons in the brain. In terms of tissue distribution, secreted from enteroendocrine cells throughout the gastrointestinal tract.

It localises to the secreted. Functionally, plays a key role in glucose metabolism and homeostasis. Regulates blood glucose by increasing gluconeogenesis and decreasing glycolysis. A counterregulatory hormone of insulin, raises plasma glucose levels in response to insulin-induced hypoglycemia. Plays an important role in initiating and maintaining hyperglycemic conditions in diabetes. Its function is as follows. Potent stimulator of glucose-dependent insulin release. Also stimulates insulin release in response to IL6. Plays important roles on gastric motility and the suppression of plasma glucagon levels. May be involved in the suppression of satiety and stimulation of glucose disposal in peripheral tissues, independent of the actions of insulin. Has growth-promoting activities on intestinal epithelium. May also regulate the hypothalamic pituitary axis (HPA) via effects on LH, TSH, CRH, oxytocin, and vasopressin secretion. Increases islet mass through stimulation of islet neogenesis and pancreatic beta cell proliferation. Inhibits beta cell apoptosis. In terms of biological role, stimulates intestinal growth and up-regulates villus height in the small intestine, concomitant with increased crypt cell proliferation and decreased enterocyte apoptosis. The gastrointestinal tract, from the stomach to the colon is the principal target for GLP-2 action. Plays a key role in nutrient homeostasis, enhancing nutrient assimilation through enhanced gastrointestinal function, as well as increasing nutrient disposal. Stimulates intestinal glucose transport and decreases mucosal permeability. Significantly reduces food intake. Inhibits gastric emptying in humans. Suppression of gastric emptying may lead to increased gastric distension, which may contribute to satiety by causing a sensation of fullness. Functionally, may modulate gastric acid secretion and the gastro-pyloro-duodenal activity. May play an important role in intestinal mucosal growth in the early period of life. In Homo sapiens (Human), this protein is Pro-glucagon.